We begin with the raw amino-acid sequence, 211 residues long: Protein-methionine-sulfoxide reductase heme-binding subunit MsrQ (211 aa).

The next 4 membrane-spanning stretches (helical) occupy residues 10–30 (WLKVCLHLAGLLPFLWLVWAI), 82–102 (LWCFAWATLHLTSYALLELGV), 116–136 (PYLTLGIISWVILLALAFTST), and 153–173 (FVYLVAILAPIHYLWSVKIIS).

It belongs to the MsrQ family. Heterodimer of a catalytic subunit (MsrP) and a heme-binding subunit (MsrQ). It depends on FMN as a cofactor. Requires heme b as cofactor.

Its subcellular location is the cell inner membrane. Its function is as follows. Part of the MsrPQ system that repairs oxidized periplasmic proteins containing methionine sulfoxide residues (Met-O), using respiratory chain electrons. Thus protects these proteins from oxidative-stress damage caused by reactive species of oxygen and chlorine generated by the host defense mechanisms. MsrPQ is essential for the maintenance of envelope integrity under bleach stress, rescuing a wide series of structurally unrelated periplasmic proteins from methionine oxidation, including the primary periplasmic chaperone SurA and the lipoprotein Pal. MsrQ provides electrons for reduction to the reductase catalytic subunit MsrP, using the quinone pool of the respiratory chain. The polypeptide is Protein-methionine-sulfoxide reductase heme-binding subunit MsrQ (Shigella dysenteriae serotype 1 (strain Sd197)).